A 302-amino-acid polypeptide reads, in one-letter code: N-acetyl-D-glucosamine kinase (302 aa).

ATP-binding positions include 4–11 (GFDVGGTK) and 133–140 (GFGGGFIY). 4 residues coordinate Zn(2+): histidine 157, cysteine 177, cysteine 179, and cysteine 184.

This sequence belongs to the ROK (NagC/XylR) family. NagK subfamily.

The enzyme catalyses N-acetyl-D-glucosamine + ATP = N-acetyl-D-glucosamine 6-phosphate + ADP + H(+). Its pathway is cell wall biogenesis; peptidoglycan recycling. Functionally, catalyzes the phosphorylation of N-acetyl-D-glucosamine (GlcNAc) derived from cell-wall degradation, yielding GlcNAc-6-P. The sequence is that of N-acetyl-D-glucosamine kinase from Vibrio parahaemolyticus serotype O3:K6 (strain RIMD 2210633).